A 404-amino-acid polypeptide reads, in one-letter code: MKLPIYLDYSATTPVDPRVAEKMMQFLTLDGTFGNPASRSHRFGWQAEEAVDIARNQIAELVGADPREIVFTSGATESDNLAIKGAANFYQKKGKHIITSKTEHKAVLDTCRQLEREGFEVTYLAPQSNGIIDLKALEAAMRDDTILVSIMHVNNEIGVVQDIATIGEMCRARGIIYHVDATQSVGKLPIDLSQLKVDLMSFSGHKIYGPKGIGALYVRRKPRIRIEAQMHGGGHERGMRSGTLPVHQIVGMGEAYRIAKEEMETEMARLRGLRNRLWNGIKDIEEVYLNGDLEQGAPNILNVSFNYVEGESLIMALKDLAVSSGSACTSASLEPSYVLRALGMNDELAHSSIRFSLGRFTTEEEIDYTIDLVRKSIGRLRDLSPLWEMYKQGVDLNSIEWAHH.

Pyridoxal 5'-phosphate is bound by residues 75-76, Asn-155, Gln-183, and 203-205; these read AT and SGH. At Lys-206 the chain carries N6-(pyridoxal phosphate)lysine. Thr-243 contributes to the pyridoxal 5'-phosphate binding site. Cys-328 functions as the Cysteine persulfide intermediate in the catalytic mechanism. Cys-328 contributes to the [2Fe-2S] cluster binding site.

This sequence belongs to the class-V pyridoxal-phosphate-dependent aminotransferase family. NifS/IscS subfamily. In terms of assembly, homodimer. Forms a heterotetramer with IscU, interacts with other sulfur acceptors. Pyridoxal 5'-phosphate is required as a cofactor.

It localises to the cytoplasm. The enzyme catalyses (sulfur carrier)-H + L-cysteine = (sulfur carrier)-SH + L-alanine. Its pathway is cofactor biosynthesis; iron-sulfur cluster biosynthesis. Functionally, master enzyme that delivers sulfur to a number of partners involved in Fe-S cluster assembly, tRNA modification or cofactor biosynthesis. Catalyzes the removal of elemental sulfur and selenium atoms from cysteine and selenocysteine to produce alanine. Functions as a sulfur delivery protein for Fe-S cluster synthesis onto IscU, an Fe-S scaffold assembly protein, as well as other S acceptor proteins. Also functions as a selenium delivery protein in the pathway for the biosynthesis of selenophosphate. In Salmonella arizonae (strain ATCC BAA-731 / CDC346-86 / RSK2980), this protein is Cysteine desulfurase IscS.